The primary structure comprises 100 residues: Sweet protein mabinlin-4 (100 aa).

4 cysteine pairs are disulfide-bonded: C4/C49, C17/C38, C39/C87, and C51/C95.

The protein belongs to the 2S seed storage albumins family. Heterodimer of a small A and a large B chain linked by disulfide bonds.

Its function is as follows. Heat stable 2S seed storage protein having sweetness-inducing activity. This chain is Sweet protein mabinlin-4, found in Capparis masaikai (Mabinlang).